Here is a 22-residue protein sequence, read N- to C-terminus: AEPNVTVTGAAGQIGYALLFRI.

Glycine 9–glycine 15 contacts NAD(+).

It belongs to the LDH/MDH superfamily. MDH type 2 family.

The catalysed reaction is (S)-malate + NAD(+) = oxaloacetate + NADH + H(+). Catalyzes the reversible oxidation of malate to oxaloacetate. This is Malate dehydrogenase (mdh) from Actinoplanes missouriensis.